Consider the following 402-residue polypeptide: Beta sliding clamp (402 aa).

It belongs to the beta sliding clamp family. In terms of assembly, forms a ring-shaped head-to-tail homodimer around DNA which binds and tethers DNA polymerases and other proteins to the DNA. The DNA replisome complex has a single clamp-loading complex (3 tau and 1 each of delta, delta', psi and chi subunits) which binds 3 Pol III cores (1 core on the leading strand and 2 on the lagging strand) each with a beta sliding clamp dimer. Additional proteins in the replisome are other copies of gamma, psi and chi, Ssb, DNA helicase and RNA primase.

It is found in the cytoplasm. In terms of biological role, confers DNA tethering and processivity to DNA polymerases and other proteins. Acts as a clamp, forming a ring around DNA (a reaction catalyzed by the clamp-loading complex) which diffuses in an ATP-independent manner freely and bidirectionally along dsDNA. Initially characterized for its ability to contact the catalytic subunit of DNA polymerase III (Pol III), a complex, multichain enzyme responsible for most of the replicative synthesis in bacteria; Pol III exhibits 3'-5' exonuclease proofreading activity. The beta chain is required for initiation of replication as well as for processivity of DNA replication. In Mycobacterium tuberculosis (strain CDC 1551 / Oshkosh), this protein is Beta sliding clamp (dnaN).